Reading from the N-terminus, the 539-residue chain is Eukaryotic translation initiation factor 3 subunit L (539 aa).

Residues 306–514 (TFSDILLYVQ…IHIADTKVSH (209 aa)) enclose the PCI domain.

Belongs to the eIF-3 subunit L family. As to quaternary structure, component of the eukaryotic translation initiation factor 3 (eIF-3) complex. The eIF-3 complex interacts with pix.

The protein resides in the cytoplasm. In terms of biological role, component of the eukaryotic translation initiation factor 3 (eIF-3) complex, which is involved in protein synthesis of a specialized repertoire of mRNAs and, together with other initiation factors, stimulates binding of mRNA and methionyl-tRNAi to the 40S ribosome. The eIF-3 complex specifically targets and initiates translation of a subset of mRNAs involved in cell proliferation. The polypeptide is Eukaryotic translation initiation factor 3 subunit L (Drosophila willistoni (Fruit fly)).